The following is a 207-amino-acid chain: Small ribosomal subunit protein uS4 (207 aa).

Residues Lys-31 to Gln-40 are compositionally biased toward basic and acidic residues. The interval Lys-31 to Leu-56 is disordered. Polar residues predominate over residues Gly-42 to Gly-53. In terms of domain architecture, S4 RNA-binding spans Ser-97 to Glu-158.

The protein belongs to the universal ribosomal protein uS4 family. As to quaternary structure, part of the 30S ribosomal subunit. Contacts protein S5. The interaction surface between S4 and S5 is involved in control of translational fidelity.

In terms of biological role, one of the primary rRNA binding proteins, it binds directly to 16S rRNA where it nucleates assembly of the body of the 30S subunit. Functionally, with S5 and S12 plays an important role in translational accuracy. This Polynucleobacter necessarius subsp. necessarius (strain STIR1) protein is Small ribosomal subunit protein uS4.